Here is a 209-residue protein sequence, read N- to C-terminus: dITP/XTP pyrophosphatase (209 aa).

Residue 7 to 12 (SSHGYK) participates in substrate binding. The Proton acceptor role is filled by Asp70. Asp70 provides a ligand contact to Mg(2+). Residues Ser71, 154-157 (FGYD), Lys177, and 182-183 (HR) contribute to the substrate site.

This sequence belongs to the HAM1 NTPase family. In terms of assembly, homodimer. The cofactor is Mg(2+).

It carries out the reaction XTP + H2O = XMP + diphosphate + H(+). The catalysed reaction is dITP + H2O = dIMP + diphosphate + H(+). It catalyses the reaction ITP + H2O = IMP + diphosphate + H(+). Functionally, pyrophosphatase that catalyzes the hydrolysis of nucleoside triphosphates to their monophosphate derivatives, with a high preference for the non-canonical purine nucleotides XTP (xanthosine triphosphate), dITP (deoxyinosine triphosphate) and ITP. Seems to function as a house-cleaning enzyme that removes non-canonical purine nucleotides from the nucleotide pool, thus preventing their incorporation into DNA/RNA and avoiding chromosomal lesions. This Chlamydia trachomatis serovar L2 (strain ATCC VR-902B / DSM 19102 / 434/Bu) protein is dITP/XTP pyrophosphatase.